We begin with the raw amino-acid sequence, 119 residues long: Hemerythrin subunit B (119 aa).

Residues histidine 26, histidine 55, glutamate 59, histidine 74, histidine 78, histidine 107, and aspartate 112 each coordinate Fe cation.

It belongs to the hemerythrin family.

In terms of biological role, hemerythrin is a respiratory protein in blood cells of certain marine worms. The oxygen-binding site in each chain contains two iron atoms. This chain is Hemerythrin subunit B, found in Sipunculus nudus (Sipunculan worm).